The following is a 1064-amino-acid chain: WD repeat-containing protein on Y chromosome (1064 aa).

WD repeat units follow at residues 153 to 197, 326 to 365, 369 to 408, 459 to 498, 511 to 550, 598 to 638, 746 to 785, and 827 to 866; these read EEVT…IRTA, RVPL…EPSA, GHNG…LLQT, THAA…RKII, IIDI…VVRN, FHTD…RRYS, KTGD…EAEK, and AHLK…LGTL. Basic and acidic residues predominate over residues 914-924; the sequence is PAKRAEVKAPE. Disordered stretches follow at residues 914–935 and 1023–1064; these read PAKR…QTDD and GSAL…QQSE. Residues 925–935 show a composition bias toward acidic residues; sequence DRDEETAQTDD.

The chain is WD repeat-containing protein on Y chromosome from Drosophila pseudoobscura pseudoobscura (Fruit fly).